A 622-amino-acid polypeptide reads, in one-letter code: Microtubule-associated protein 70-1 (622 aa).

Residues 1 to 27 (MSDVSADGGFLSAEQATTPVAIPTPYP) are disordered. Residues 66–365 (DPVKVELNRL…LAISDRAAKS (300 aa)) adopt a coiled-coil conformation. Residues 250-483 (ILDRMHRQKV…YSFNKACDET (234 aa)) are required for targeting to microtubules. Disordered stretches follow at residues 388–512 (SSIS…TEDN) and 579–622 (AAMR…RSTQ). Polar residues-rich tracts occupy residues 400 to 425 (SMSN…SNGF) and 432 to 453 (MRNS…TSKS). 2 stretches are compositionally biased toward basic and acidic residues: residues 479–501 (ACDE…EKPP) and 579–591 (AAMR…DNRA). Positions 541 to 590 (DKDDAIEMLAKKVETLTKAMEVEAKKMRREVAAMEKEVAAMRVDKDQDNR) form a coiled coil. A compositionally biased stretch (polar residues) spans 594 to 605 (SSNTKPSSNTAQ).

The protein belongs to the MAP70 family. In terms of assembly, interacts with MAP70.5 and itself.

The protein resides in the cytoplasm. Its subcellular location is the cytoskeleton. The protein localises to the phragmoplast. It is found in the spindle. Its function is as follows. Plant-specific protein that interact with microtubules. In association with MAP70.5, is essential for the normal banding pattern of secondary cell wall and for the proper development of xylem tracheary elements and wood formation. This Arabidopsis thaliana (Mouse-ear cress) protein is Microtubule-associated protein 70-1 (MAP70.1).